We begin with the raw amino-acid sequence, 236 residues long: ATP synthase subunit 4, mitochondrial (236 aa).

A mitochondrion-targeting transit peptide spans 1–29 (MAFRALTTKAAARPLLALGPRSVAMGARY).

It belongs to the eukaryotic ATPase subunit B family. In terms of assembly, F-type ATPases have 2 components, CF(1) - the catalytic core - and CF(0) - the membrane proton channel. In yeast, the dimeric form of ATP synthase consists of 17 polypeptides: alpha, beta, gamma, delta, epsilon, 4 (B), 5 (OSCP), 6 (A), 8, 9 (C), d, E (Tim11), f, g, h, i/j and k.

It localises to the mitochondrion. The protein resides in the mitochondrion inner membrane. Functionally, mitochondrial membrane ATP synthase (F(1)F(0) ATP synthase or Complex V) produces ATP from ADP in the presence of a proton gradient across the membrane which is generated by electron transport complexes of the respiratory chain. F-type ATPases consist of two structural domains, F(1) - containing the extramembraneous catalytic core, and F(0) - containing the membrane proton channel, linked together by a central stalk and a peripheral stalk. During catalysis, ATP synthesis in the catalytic domain of F(1) is coupled via a rotary mechanism of the central stalk subunits to proton translocation. Part of the complex F(0) domain and the peripheric stalk, which acts as a stator to hold the catalytic alpha(3)beta(3) subcomplex and subunit a/ATP6 static relative to the rotary elements. The chain is ATP synthase subunit 4, mitochondrial (ATP4) from Eremothecium gossypii (strain ATCC 10895 / CBS 109.51 / FGSC 9923 / NRRL Y-1056) (Yeast).